Consider the following 629-residue polypeptide: uncharacterized protein (629 aa).

Residues 1 to 11 show a composition bias toward polar residues; sequence MSDDQQNGKQN. Disordered regions lie at residues 1-24, 62-87, 197-464, and 493-560; these read MSDD…EQDD, SNNN…SNYN, SEES…SSLI, and PTPT…STPD. A compositionally biased stretch (low complexity) spans 247–264; it reads PSSSSSSSSLINSPTTSK. The segment covering 274–288 has biased composition (polar residues); sequence PTINPKSLFGLSSTI. A compositionally biased stretch (basic and acidic residues) spans 294–430; sequence VKTEKEKEKE…DETLNKETPH (137 aa). 2 stretches are compositionally biased toward low complexity: residues 434-464 and 493-554; these read PHIT…SSLI and PTPT…NNNN.

This is an uncharacterized protein from Dictyostelium discoideum (Social amoeba).